The chain runs to 312 residues: Methionyl-tRNA formyltransferase (312 aa).

107-110 (SLLP) serves as a coordination point for (6S)-5,6,7,8-tetrahydrofolate.

The protein belongs to the Fmt family.

The enzyme catalyses L-methionyl-tRNA(fMet) + (6R)-10-formyltetrahydrofolate = N-formyl-L-methionyl-tRNA(fMet) + (6S)-5,6,7,8-tetrahydrofolate + H(+). Its function is as follows. Attaches a formyl group to the free amino group of methionyl-tRNA(fMet). The formyl group appears to play a dual role in the initiator identity of N-formylmethionyl-tRNA by promoting its recognition by IF2 and preventing the misappropriation of this tRNA by the elongation apparatus. This Borreliella burgdorferi (strain ZS7) (Borrelia burgdorferi) protein is Methionyl-tRNA formyltransferase.